Consider the following 131-residue polypeptide: ATP synthase epsilon chain (131 aa).

It belongs to the ATPase epsilon chain family. F-type ATPases have 2 components, CF(1) - the catalytic core - and CF(0) - the membrane proton channel. CF(1) has five subunits: alpha(3), beta(3), gamma(1), delta(1), epsilon(1). CF(0) has three main subunits: a, b and c.

The protein resides in the cell inner membrane. Produces ATP from ADP in the presence of a proton gradient across the membrane. This is ATP synthase epsilon chain from Wolinella succinogenes (strain ATCC 29543 / DSM 1740 / CCUG 13145 / JCM 31913 / LMG 7466 / NCTC 11488 / FDC 602W) (Vibrio succinogenes).